Reading from the N-terminus, the 388-residue chain is P2X purinoceptor 4 (388 aa).

The Cytoplasmic portion of the chain corresponds to 1–33 (MAGCCSVLGSFLFEYDTPRIVLIRSRKVGLMNR). The chain crosses the membrane as a helical span at residues 34-54 (AVQLLILAYVIGWVFVWEKGY). Topologically, residues 55-338 (QETDSVVSSV…KFDIIPTMIN (284 aa)) are extracellular. Residues lysine 67 and lysine 69 each coordinate ATP. CTP-binding residues include lysine 67 and lysine 69. Residues asparagine 75 and asparagine 110 are each glycosylated (N-linked (GlcNAc...) asparagine). Intrachain disulfides connect cysteine 116-cysteine 165, cysteine 126-cysteine 149, and cysteine 132-cysteine 159. N-linked (GlcNAc...) asparagine glycosylation is found at asparagine 153 and asparagine 184. ATP is bound by residues threonine 186 and leucine 188. A CTP-binding site is contributed by threonine 186. 2 N-linked (GlcNAc...) asparagine glycosylation sites follow: asparagine 199 and asparagine 208. Cystine bridges form between cysteine 217/cysteine 227 and cysteine 261/cysteine 270. Residues asparagine 293, arginine 295, and lysine 313 each contribute to the ATP site. CTP-binding residues include asparagine 293, arginine 295, and lysine 313. The chain crosses the membrane as a helical span at residues 339 to 359 (VGSGLALLGVATVLCDVIVLY). At 360-388 (CMKKKYYYRDKKYKYVEDYEQGLSGEMNQ) the chain is on the cytoplasmic side.

It belongs to the P2X receptor family. Functional P2RXs are organized as homomeric and heteromeric trimers. Forms heterotrimer with P2RX1. Interacts with P2RX7 (via C-terminus); this interaction is functional only in the presence of ATP. Forms heterotrimer with P2RX4; functional differences between homomeric P2RX4 and P2RX4/6 heterotrimer are minor. Interacts with AP1M2. Widespread distribution in the brain. Strongly expressed in microglial cells. Also expressed in epithelial cells.

Its subcellular location is the cell membrane. The protein localises to the lysosome membrane. The catalysed reaction is K(+)(in) = K(+)(out). It catalyses the reaction Na(+)(in) = Na(+)(out). It carries out the reaction Ca(2+)(in) = Ca(2+)(out). With respect to regulation, activated by ATP. pH-dependent and inhibited by acidic pH. Functionally, ATP-gated nonselective transmembrane cation channel permeable to potassium, sodium and calcium. CTP, but not GTP or UTP, functions as a weak affinity agonist for P2RX4. Activated by extracellularly released ATP, it plays multiple role in immunity and central nervous system physiology. Plays a key role in initial steps of T-cell activation and Ca(2+) microdomain formation. Also participates in basal T-cell activity without TCR/CD3 stimulation. Promotes the differentiation and activation of Th17 cells via expression of retinoic acid-related orphan receptor C/RORC. Upon activation, drives microglia motility via the PI3K/Akt pathway. Could also function as an ATP-gated cation channel of lysosomal membranes. This chain is P2X purinoceptor 4 (P2rx4), found in Rattus norvegicus (Rat).